The chain runs to 503 residues: Puromycin resistance protein pur8 (503 aa).

The Cytoplasmic portion of the chain corresponds to 1 to 24 (MARKPDISAVPVESAACQGPDPRR). A helical membrane pass occupies residues 25-45 (WWGLVVILAAQLLVVLDGTVV). Residues 46–64 (NIALPSVQRDLGMSDTSRQ) lie on the Extracellular side of the membrane. The helical transmembrane segment at 65 to 85 (WVITAYTLAFGGLLLLGGRVA) threads the bilayer. At 86-92 (DAFGRRR) the chain is on the cytoplasmic side. A helical transmembrane segment spans residues 93-113 (IFAVGILGFGLASLLGGAAPD). The Extracellular segment spans residues 114 to 122 (PGTLFLARA). The helical transmembrane segment at 123-143 (LQGVFAAALAPAALALINTLF) threads the bilayer. Over 144-152 (TEPGERGKA) the chain is Cytoplasmic. The chain crosses the membrane as a helical span at residues 153–173 (FGVYGAVSGGGAAVGLLAGGL). Over 174-181 (LTEYLDWR) the chain is Extracellular. A helical membrane pass occupies residues 182–202 (WCLYVNAPVALLALLGCRLLP). Over 203–212 (RDRRTGRAVR) the chain is Cytoplasmic. Residues 213-233 (LDLPGTLLGCGGLVAIVYAFA) form a helical membrane-spanning segment. Residues 234–241 (EAESGWGD) are Extracellular-facing. A helical membrane pass occupies residues 242 to 262 (PLVVRLLVLGVLMLVAFALVE). At 263 to 280 (RRVQDPLLPPGVVAHRVR) the chain is on the cytoplasmic side. Residues 281 to 301 (GGSFLVVGLPQIGLFGLFLFL) traverse the membrane as a helical segment. At 302–313 (TYYLQGILDYSP) the chain is on the extracellular side. A helical membrane pass occupies residues 314 to 334 (VLTGVAFLPLGLGIAVGSSLI). Topologically, residues 335–346 (AARLLPRTRPRT) are cytoplasmic. Residues 347-367 (LIVGALLAAAAGMALLTRLEP) traverse the membrane as a helical segment. Residues 368 to 371 (DTPQ) are Extracellular-facing. Residues 372-392 (VYLTHLLPAQILIGLGIGCMM) form a helical membrane-spanning segment. The Cytoplasmic segment spans residues 393-422 (MPAMHTATARVAPHEAGAAAAVVNSAQQVG). The chain crosses the membrane as a helical span at residues 423 to 443 (GALGVALLNTVSTGATAAYLA). The Extracellular portion of the chain corresponds to 444-461 (DHGTSPAATVDGTVHGYT). A helical membrane pass occupies residues 462 to 482 (VAIAFAVGVLLLTAVLAWVLI). Residues 483–503 (DSRTEAADETGSASVTPARPR) lie on the Cytoplasmic side of the membrane.

It belongs to the major facilitator superfamily. EmrB family.

It localises to the cell membrane. May be involved in active puromycin efflux energized by a proton-dependent electrochemical gradient. In addition, it could be implicated in secreting N-acetylpuromycin, the last intermediate of the puromycin biosynthesis pathway, to the environment. In Streptomyces alboniger, this protein is Puromycin resistance protein pur8 (pur8).